Here is a 509-residue protein sequence, read N- to C-terminus: 5-hydroxytryptamine receptor (509 aa).

Over 1-99 the chain is Extracellular; the sequence is MANFTFGDLA…YSHEHLVLTS (99 aa). Asn-3, Asn-47, Asn-58, Asn-68, Asn-72, and Asn-78 each carry an N-linked (GlcNAc...) asparagine glycan. Residues 100–122 traverse the membrane as a helical segment; sequence VILGLFVLCCIIGNCFVIAAVML. Residues 123 to 132 are Cytoplasmic-facing; the sequence is ERSLHNVANY. A helical membrane pass occupies residues 133–154; sequence LILSLAVADLMVAVLVMPLSVV. Over 155–169 the chain is Extracellular; sequence SEISKVWFLHSEVCD. Cys-168 and Cys-246 form a disulfide bridge. The chain crosses the membrane as a helical span at residues 170–191; it reads MWISVDVLCCTASILHLVAIAM. The Cytoplasmic segment spans residues 192–210; the sequence is DRYWAVTSIDYIRRRSARR. A helical transmembrane segment spans residues 211-233; the sequence is ILLMIMVVWIVALFISIPPLFGW. The Extracellular segment spans residues 234-259; it reads RDPNNDPDKTGTCIISQDKGYTIFST. The helical transmembrane segment at 260 to 281 threads the bilayer; the sequence is VGAFYLPMLVMMIIYIRIWLVA. The Cytoplasmic segment spans residues 282–432; it reads RSRIRKDKFQ…LKRERKAART (151 aa). A disordered region spans residues 323–372; it reads SPDSTTEKKKRRAPFKSYGCSPRPERKKNRAKKLPENANGVNSNSSSSER. Residues 433-456 form a helical membrane-spanning segment; the sequence is LAIITGAFLICWLPFFIIALIGPF. The Extracellular segment spans residues 457 to 465; it reads VDPEGIPPF. A helical membrane pass occupies residues 466–488; the sequence is ARSFVLWLGYFNSLLNPIIYTIF. Topologically, residues 489–509 are cytoplasmic; it reads SPEFRSAFQKILFGKYRRGHR.

Belongs to the G-protein coupled receptor 1 family.

The protein localises to the cell membrane. In terms of biological role, this is a receptor for 5-hydroxytryptamine (serotonin), a biogenic hormone that function as a neurotransmitter, a hormone, and a mitogen. The protein is 5-hydroxytryptamine receptor of Lymnaea stagnalis (Great pond snail).